Reading from the N-terminus, the 194-residue chain is Homing endonuclease I-DmoI (194 aa).

Residues 14–147 form the DOD-type homing endonuclease domain; that stretch reads LLGLIIGDGG…VSRWLNNLGV (134 aa). Active-site residues include aspartate 21 and glutamate 117.

Requires a divalent metal cation as cofactor.

In terms of biological role, endonuclease involved in intron homing. Recognizes DNA in the 23S rRNA gene intron (minimally 5'-CCGGGTAAGTTCCGG-3'), cutting after A-8 on the top and C-11 on the bottom strand. Has a slow turnover rate, cuts the coding strand with a slight preference over the non-coding strand. This is Homing endonuclease I-DmoI from Desulfurococcus mucosus (Desulfurococcus mobilis).